Reading from the N-terminus, the 396-residue chain is ATP phosphoribosyltransferase regulatory subunit (396 aa).

This sequence belongs to the class-II aminoacyl-tRNA synthetase family. HisZ subfamily. As to quaternary structure, heteromultimer composed of HisG and HisZ subunits.

The protein resides in the cytoplasm. It participates in amino-acid biosynthesis; L-histidine biosynthesis; L-histidine from 5-phospho-alpha-D-ribose 1-diphosphate: step 1/9. Required for the first step of histidine biosynthesis. May allow the feedback regulation of ATP phosphoribosyltransferase activity by histidine. The chain is ATP phosphoribosyltransferase regulatory subunit from Alkaliphilus metalliredigens (strain QYMF).